The chain runs to 311 residues: Probable manganese-dependent inorganic pyrophosphatase (311 aa).

Mn(2+)-binding residues include histidine 9, aspartate 13, aspartate 15, aspartate 77, histidine 99, and aspartate 151.

This sequence belongs to the PPase class C family. Mn(2+) serves as cofactor.

The protein localises to the cytoplasm. The enzyme catalyses diphosphate + H2O = 2 phosphate + H(+). The polypeptide is Probable manganese-dependent inorganic pyrophosphatase (Streptococcus equi subsp. zooepidemicus (strain MGCS10565)).